Consider the following 177-residue polypeptide: Large ribosomal subunit protein uL6 (177 aa).

Residues 151 to 177 (LRPPEPYKGKGVRYAGENVRRKEGKKK) are disordered.

Belongs to the universal ribosomal protein uL6 family. In terms of assembly, part of the 50S ribosomal subunit.

This protein binds to the 23S rRNA, and is important in its secondary structure. It is located near the subunit interface in the base of the L7/L12 stalk, and near the tRNA binding site of the peptidyltransferase center. This chain is Large ribosomal subunit protein uL6, found in Phenylobacterium zucineum (strain HLK1).